A 395-amino-acid polypeptide reads, in one-letter code: ATP phosphoribosyltransferase regulatory subunit (395 aa).

It belongs to the class-II aminoacyl-tRNA synthetase family. HisZ subfamily. In terms of assembly, heteromultimer composed of HisG and HisZ subunits.

The protein resides in the cytoplasm. It participates in amino-acid biosynthesis; L-histidine biosynthesis; L-histidine from 5-phospho-alpha-D-ribose 1-diphosphate: step 1/9. Required for the first step of histidine biosynthesis. May allow the feedback regulation of ATP phosphoribosyltransferase activity by histidine. The protein is ATP phosphoribosyltransferase regulatory subunit of Azotobacter vinelandii (strain DJ / ATCC BAA-1303).